An 89-amino-acid polypeptide reads, in one-letter code: Cornifin (89 aa).

A disordered region spans residues methionine 1–proline 29. The residue at position 2 (serine 2) is an N-acetylserine. 8 repeat units span residues serine 3–proline 14, glutamine 18–proline 29, glutamate 31–lysine 38, glutamate 39–proline 46, glutamate 47–proline 54, glutamate 55–proline 62, glutamate 63–proline 70, and glutamate 71–threonine 78. The interval serine 3–proline 29 is 2 X 12 AA approximate repeats. The tract at residues glutamate 31–threonine 78 is 6 X 8 AA approximate tandem repeats. The interval lysine 68–lysine 89 is disordered. Residues serine 75–lysine 89 are compositionally biased toward polar residues.

Belongs to the cornifin (SPRR) family.

Its subcellular location is the cytoplasm. Cross-linked envelope protein of keratinocytes. It is a keratinocyte protein that first appears in the cell cytosol, but ultimately becomes cross-linked to membrane proteins by transglutaminase. All that results in the formation of an insoluble envelope beneath the plasma membrane. This is Cornifin (SPRR1) from Macaca mulatta (Rhesus macaque).